A 1079-amino-acid chain; its full sequence is DNA ligase 4 (1079 aa).

The disordered stretch occupies residues 1–20 (MAVHAPYNHAPPPTQEINGQ). Positions 295, 297, 298, 302, 357, 395, 460, 465, 482, and 484 each coordinate ATP. Lysine 297 acts as the N6-AMP-lysine intermediate in catalysis. Residue glutamate 357 coordinates Mg(2+). Glutamate 460 is a Mg(2+) binding site. One can recognise a BRCT 1 domain in the interval 699–789 (VETSIFSDMT…TALPFLKEFL (91 aa)). Over residues 838–847 (DGEDKDEIDV) the composition is skewed to acidic residues. A disordered region spans residues 838–942 (DGEDKDEIDV…SDVGVNGDDY (105 aa)). Composition is skewed to basic and acidic residues over residues 848-878 (EESR…KKLQ) and 900-914 (MSLK…ERSR). One can recognise a BRCT 2 domain in the interval 968 to 1078 (DEDRIFYHLA…TLLDEDLYKP (111 aa)).

The protein belongs to the ATP-dependent DNA ligase family. Mg(2+) is required as a cofactor.

It localises to the nucleus. The catalysed reaction is ATP + (deoxyribonucleotide)n-3'-hydroxyl + 5'-phospho-(deoxyribonucleotide)m = (deoxyribonucleotide)n+m + AMP + diphosphate.. DNA ligase involved in DNA non-homologous end joining (NHEJ); required for double-strand break (DSB) repair. This chain is DNA ligase 4 (LIG4), found in Cryptococcus neoformans var. neoformans serotype D (strain JEC21 / ATCC MYA-565) (Filobasidiella neoformans).